Here is a 216-residue protein sequence, read N- to C-terminus: Ras-related protein Rab-5C (216 aa).

GTP-binding residues include serine 30, alanine 31, glycine 33, lysine 34, serine 35, serine 36, histidine 47, glutamate 48, threonine 53, and glycine 79. Residue serine 35 participates in Mg(2+) binding. 2 consecutive short sequence motifs (switch) follow at residues 45–57 and 78–94; these read QFHE…IGAA and AGQE…YRGA. Threonine 53 contacts Mg(2+). At serine 85 the chain carries Phosphoserine. Asparagine 134, lysine 135, aspartate 137, alanine 165, and lysine 166 together coordinate GTP. The disordered stretch occupies residues 185–216; it reads NEPQNAAGAPSRNRGVDLQENSPASRSQCCSN. Positions 203–216 are enriched in polar residues; that stretch reads QENSPASRSQCCSN. Residues cysteine 213 and cysteine 214 are each lipidated (S-geranylgeranyl cysteine).

It belongs to the small GTPase superfamily. Rab family. As to quaternary structure, interacts with EEA1 and INCA1. Interacts with GDI1, GDI2, CHML and CHM; phosphorylation at Ser-85 disrupts this interaction. Mg(2+) serves as cofactor. Post-translationally, phosphorylation of Ser-85 in the switch II region by LRRK2 prevents the association of RAB regulatory proteins, including CHM, CHML and RAB GDP dissociation inhibitors GDI1 and GDI2.

It is found in the cell membrane. It localises to the early endosome membrane. The protein localises to the melanosome. It carries out the reaction GTP + H2O = GDP + phosphate + H(+). Regulated by guanine nucleotide exchange factors (GEFs) which promote the exchange of bound GDP for free GTP. Regulated by GTPase activating proteins (GAPs) which increase the GTP hydrolysis activity. Inhibited by GDP dissociation inhibitors (GDIs). Functionally, the small GTPases Rab are key regulators of intracellular membrane trafficking, from the formation of transport vesicles to their fusion with membranes. Rabs cycle between an inactive GDP-bound form and an active GTP-bound form that is able to recruit to membranes different sets of downstream effectors directly responsible for vesicle formation, movement, tethering and fusion. This is Ras-related protein Rab-5C (RAB5C) from Canis lupus familiaris (Dog).